Consider the following 228-residue polypeptide: Urease accessory protein UreF (228 aa).

Belongs to the UreF family. UreD, UreF and UreG form a complex that acts as a GTP-hydrolysis-dependent molecular chaperone, activating the urease apoprotein by helping to assemble the nickel containing metallocenter of UreC. The UreE protein probably delivers the nickel.

The protein resides in the cytoplasm. Its function is as follows. Required for maturation of urease via the functional incorporation of the urease nickel metallocenter. The polypeptide is Urease accessory protein UreF (Yersinia enterocolitica serotype O:8 / biotype 1B (strain NCTC 13174 / 8081)).